The primary structure comprises 171 residues: Crossover junction endodeoxyribonuclease RuvC (171 aa).

Active-site residues include Asp11, Glu71, and Asp143. Mg(2+)-binding residues include Asp11, Glu71, and Asp143.

Belongs to the RuvC family. As to quaternary structure, homodimer which binds Holliday junction (HJ) DNA. The HJ becomes 2-fold symmetrical on binding to RuvC with unstacked arms; it has a different conformation from HJ DNA in complex with RuvA. In the full resolvosome a probable DNA-RuvA(4)-RuvB(12)-RuvC(2) complex forms which resolves the HJ. It depends on Mg(2+) as a cofactor.

It localises to the cytoplasm. The enzyme catalyses Endonucleolytic cleavage at a junction such as a reciprocal single-stranded crossover between two homologous DNA duplexes (Holliday junction).. In terms of biological role, the RuvA-RuvB-RuvC complex processes Holliday junction (HJ) DNA during genetic recombination and DNA repair. Endonuclease that resolves HJ intermediates. Cleaves cruciform DNA by making single-stranded nicks across the HJ at symmetrical positions within the homologous arms, yielding a 5'-phosphate and a 3'-hydroxyl group; requires a central core of homology in the junction. The consensus cleavage sequence is 5'-(A/T)TT(C/G)-3'. Cleavage occurs on the 3'-side of the TT dinucleotide at the point of strand exchange. HJ branch migration catalyzed by RuvA-RuvB allows RuvC to scan DNA until it finds its consensus sequence, where it cleaves and resolves the cruciform DNA. This Bartonella tribocorum (strain CIP 105476 / IBS 506) protein is Crossover junction endodeoxyribonuclease RuvC.